A 491-amino-acid chain; its full sequence is MSFVIASPEALLAAATDLAAIRSTIRAANAAAAVPTTGALAPAADEVSAGIAALFGAQAQSYQAVSAQAAAFHDRFVQLLNAGGGSYASAEIANAQQNLLNAVNAPTQTLLGRPLVGDGADGASGPVGQPGGDGGILWGNGGNGGDSTSPGVAGGAGGSAGLIGNGGRGGNGAPGGAGGNGGLGGLLLGNGGAGGVGGTGDNGVGDLGAGGGGGDGGLGGRAGLIGHGGAGGNGGDGGHGGSGKAGGSGGSGGFGQFGGAGGLLYGNGGAAGSGGNGGDAGTGVSSDGFAGLGGSGGRGGDAGLIGVGGGGGNGGDPGLGARLFQVGSRGGDGGVGGWLYGDGGGGGDGGNGGLPFIGSTNAGNGGSARLIGNGGAGGSGGSGAPGSVSSGGVGGAGNPGGSGGNGGVWYGNGGAGGAAGQGGPGMNTTSPGGPGGVGGHGGTAILFGDGGAGGAGAAGGPGTPDGAAGPGGSGGTGGLLFGVPGPSGPDG.

The region spanning Met-1 to Ile-92 is the PE domain. 3 disordered regions span residues Pro-114–Ala-156, Ala-376–Gly-400, and Ala-419–Gly-491. Positions Gly-128 to Gly-145 are enriched in gly residues. Gly residues predominate over residues Gly-432 to Leu-480.

Belongs to the mycobacterial PE family. PGRS subfamily.

This is an uncharacterized protein from Mycobacterium bovis (strain ATCC BAA-935 / AF2122/97).